Reading from the N-terminus, the 263-residue chain is Phosphonates import ATP-binding protein PhnC 1 (263 aa).

The 246-residue stretch at 3–248 folds into the ABC transporter domain; sequence IQVENLWVAF…KEKELYFGEK (246 aa). An ATP-binding site is contributed by 37-44; it reads GPSGAGKS.

Belongs to the ABC transporter superfamily. Phosphonates importer (TC 3.A.1.9.1) family. As to quaternary structure, the complex is composed of two ATP-binding proteins (PhnC), two transmembrane proteins (PhnE) and a solute-binding protein (PhnD).

The protein resides in the cell inner membrane. It carries out the reaction phosphonate(out) + ATP + H2O = phosphonate(in) + ADP + phosphate + H(+). Functionally, part of the ABC transporter complex PhnCDE involved in phosphonates import. Responsible for energy coupling to the transport system. This Synechococcus sp. (strain JA-2-3B'a(2-13)) (Cyanobacteria bacterium Yellowstone B-Prime) protein is Phosphonates import ATP-binding protein PhnC 1.